The sequence spans 230 residues: Large ribosomal subunit protein uL1 (230 aa).

This sequence belongs to the universal ribosomal protein uL1 family. Part of the 50S ribosomal subunit.

Its function is as follows. Binds directly to 23S rRNA. The L1 stalk is quite mobile in the ribosome, and is involved in E site tRNA release. In terms of biological role, protein L1 is also a translational repressor protein, it controls the translation of the L11 operon by binding to its mRNA. This chain is Large ribosomal subunit protein uL1, found in Paramagnetospirillum magneticum (strain ATCC 700264 / AMB-1) (Magnetospirillum magneticum).